Here is a 420-residue protein sequence, read N- to C-terminus: Acyl-coenzyme A amino acid N-acyltransferase 2 (420 aa).

Active-site charge relay system residues include serine 235, aspartate 329, and histidine 363. A Microbody targeting signal motif is present at residues 418–420; sequence SKL.

It belongs to the C/M/P thioester hydrolase family.

It is found in the peroxisome. Functionally, acyltransferase which efficiently conjugates very long-chain and long-chain fatty acids to taurine. Shows no conjugation activity in the presence of glycine. The polypeptide is Acyl-coenzyme A amino acid N-acyltransferase 2 (Mus musculus (Mouse)).